A 251-amino-acid chain; its full sequence is uncharacterized protein (251 aa).

A signal peptide spans 1–25 (MSAGRLNKKSLGIVMLLSVGLLLAG). The N-palmitoyl cysteine moiety is linked to residue cysteine 26. Cysteine 26 carries S-diacylglycerol cysteine lipidation. Residues 40–84 (SVYTVKRGDTLYRISRTTGTSVKELARLNGISPPYTIEVGQKLKL) form the LysM domain. Residues 93–112 (TRKSTAKSTTKTASVTPSSA) are compositionally biased toward low complexity. The tract at residues 93–115 (TRKSTAKSTTKTASVTPSSAVPK) is disordered.

Belongs to the peptidase M23B family.

Its subcellular location is the cell inner membrane. This is an uncharacterized protein from Escherichia coli (strain K12).